Consider the following 448-residue polypeptide: Methionine aminopeptidase 2 (448 aa).

Residues 1 to 17 show a composition bias toward low complexity; that stretch reads MPATAEAADAATQATDA. Residues 1–87 are disordered; sequence MPATAEAADA…QTEPPSIGLT (87 aa). The segment covering 21–34 has biased composition (basic and acidic residues); it reads KLEENKLPEGQERG. Residues 35 to 46 show a composition bias toward acidic residues; that stretch reads PEEEEDDDDDET. Basic residues predominate over residues 55-71; the sequence is KKKKKKKSGAKKKKSKT. Residue His-200 coordinates substrate. A divalent metal cation is bound by residues Asp-220, Asp-231, and His-300. His-308 serves as a coordination point for substrate. 2 residues coordinate a divalent metal cation: Glu-334 and Glu-429.

This sequence belongs to the peptidase M24A family. Methionine aminopeptidase eukaryotic type 2 subfamily. Requires Co(2+) as cofactor. It depends on Zn(2+) as a cofactor. Mn(2+) is required as a cofactor. The cofactor is Fe(2+).

Its subcellular location is the cytoplasm. It carries out the reaction Release of N-terminal amino acids, preferentially methionine, from peptides and arylamides.. Functionally, cotranslationally removes the N-terminal methionine from nascent proteins. The N-terminal methionine is often cleaved when the second residue in the primary sequence is small and uncharged (Met-Ala-, Cys, Gly, Pro, Ser, Thr, or Val). This is Methionine aminopeptidase 2 from Malassezia globosa (strain ATCC MYA-4612 / CBS 7966) (Dandruff-associated fungus).